We begin with the raw amino-acid sequence, 118 residues long: MLMHSILILLVIIITTYFTRIWPFMVFNSKNPPNDFVRYLGRALSCSVIGMLVVYCFKDIHVLKPPYGINEITAFLSVILLHRIFKVFVLSITLPTILYMVLVQSHALEKAFFNIHVS.

A run of 3 helical transmembrane segments spans residues 6–26, 43–63, and 84–104; these read ILIL…PFMV, ALSC…IHVL, and IFKV…VLVQ.

It belongs to the AzlD/HI_1737/HP1330 family.

The protein localises to the cell membrane. This is an uncharacterized protein from Helicobacter pylori (strain J99 / ATCC 700824) (Campylobacter pylori J99).